A 66-amino-acid chain; its full sequence is Large ribosomal subunit protein bL33c (66 aa).

This sequence belongs to the bacterial ribosomal protein bL33 family.

It localises to the plastid. The protein localises to the chloroplast. This Arabis hirsuta (Hairy rock-cress) protein is Large ribosomal subunit protein bL33c.